Consider the following 346-residue polypeptide: uncharacterized protein (346 aa).

Zn(2+) is bound at residue H65. D67 is a catalytic residue. Residue D89 coordinates Zn(2+). Catalysis depends on E115, which acts as the Proton acceptor. Zn(2+) contacts are provided by E116, E145, and H319.

It belongs to the peptidase M20A family. Requires Zn(2+) as cofactor. The cofactor is Co(2+).

This is an uncharacterized protein from Methanocaldococcus jannaschii (strain ATCC 43067 / DSM 2661 / JAL-1 / JCM 10045 / NBRC 100440) (Methanococcus jannaschii).